The chain runs to 430 residues: Tol-Pal system protein TolB (430 aa).

Residues 1–21 form the signal peptide; it reads MKQALRVAFGFLMLWAAVLHA.

Belongs to the TolB family. The Tol-Pal system is composed of five core proteins: the inner membrane proteins TolA, TolQ and TolR, the periplasmic protein TolB and the outer membrane protein Pal. They form a network linking the inner and outer membranes and the peptidoglycan layer.

The protein resides in the periplasm. Functionally, part of the Tol-Pal system, which plays a role in outer membrane invagination during cell division and is important for maintaining outer membrane integrity. TolB occupies a key intermediary position in the Tol-Pal system because it communicates directly with both membrane-embedded components, Pal in the outer membrane and TolA in the inner membrane. The sequence is that of Tol-Pal system protein TolB from Salmonella enteritidis PT4 (strain P125109).